The primary structure comprises 362 residues: Carbamoyl phosphate synthase small chain (362 aa).

Positions 1–172 (MKAFLVLDNG…SKYIFGTHTG (172 aa)) are CPSase. The L-glutamine site is built by serine 45, glycine 224, and glycine 226. One can recognise a Glutamine amidotransferase type-1 domain in the interval 176–362 (KLAVYDYGVK…YDLVEKTKKG (187 aa)). Cysteine 252 (nucleophile) is an active-site residue. Positions 253, 256, 294, 296, and 297 each coordinate L-glutamine. Residues histidine 335 and glutamate 337 contribute to the active site.

It belongs to the CarA family. Composed of two chains; the small (or glutamine) chain promotes the hydrolysis of glutamine to ammonia, which is used by the large (or ammonia) chain to synthesize carbamoyl phosphate. Tetramer of heterodimers (alpha,beta)4.

The enzyme catalyses hydrogencarbonate + L-glutamine + 2 ATP + H2O = carbamoyl phosphate + L-glutamate + 2 ADP + phosphate + 2 H(+). The catalysed reaction is L-glutamine + H2O = L-glutamate + NH4(+). Its pathway is amino-acid biosynthesis; L-arginine biosynthesis; carbamoyl phosphate from bicarbonate: step 1/1. It functions in the pathway pyrimidine metabolism; UMP biosynthesis via de novo pathway; (S)-dihydroorotate from bicarbonate: step 1/3. In terms of biological role, small subunit of the glutamine-dependent carbamoyl phosphate synthetase (CPSase). CPSase catalyzes the formation of carbamoyl phosphate from the ammonia moiety of glutamine, carbonate, and phosphate donated by ATP, constituting the first step of 2 biosynthetic pathways, one leading to arginine and/or urea and the other to pyrimidine nucleotides. The small subunit (glutamine amidotransferase) binds and cleaves glutamine to supply the large subunit with the substrate ammonia. The polypeptide is Carbamoyl phosphate synthase small chain (Leptospira interrogans serogroup Icterohaemorrhagiae serovar Lai (strain 56601)).